Reading from the N-terminus, the 380-residue chain is ATP phosphoribosyltransferase regulatory subunit (380 aa).

This sequence belongs to the class-II aminoacyl-tRNA synthetase family. HisZ subfamily. As to quaternary structure, heteromultimer composed of HisG and HisZ subunits.

The protein localises to the cytoplasm. It functions in the pathway amino-acid biosynthesis; L-histidine biosynthesis; L-histidine from 5-phospho-alpha-D-ribose 1-diphosphate: step 1/9. In terms of biological role, required for the first step of histidine biosynthesis. May allow the feedback regulation of ATP phosphoribosyltransferase activity by histidine. In Thermoanaerobacter sp. (strain X514), this protein is ATP phosphoribosyltransferase regulatory subunit.